Reading from the N-terminus, the 623-residue chain is DNA-directed RNA polymerase subunit beta' (623 aa).

Zn(2+) contacts are provided by C70, C72, C85, and C88. Positions 466, 468, and 470 each coordinate Mg(2+).

The protein belongs to the RNA polymerase beta' chain family. RpoC1 subfamily. In plastids the minimal PEP RNA polymerase catalytic core is composed of four subunits: alpha, beta, beta', and beta''. When a (nuclear-encoded) sigma factor is associated with the core the holoenzyme is formed, which can initiate transcription. Mg(2+) is required as a cofactor. The cofactor is Zn(2+).

It is found in the plastid. It localises to the chloroplast. It catalyses the reaction RNA(n) + a ribonucleoside 5'-triphosphate = RNA(n+1) + diphosphate. In terms of biological role, DNA-dependent RNA polymerase catalyzes the transcription of DNA into RNA using the four ribonucleoside triphosphates as substrates. The sequence is that of DNA-directed RNA polymerase subunit beta' from Guillardia theta (Cryptophyte).